Here is a 73-residue protein sequence, read N- to C-terminus: Translational regulator CsrA (73 aa).

The protein belongs to the CsrA/RsmA family. As to quaternary structure, homodimer; the beta-strands of each monomer intercalate to form a hydrophobic core, while the alpha-helices form wings that extend away from the core.

The protein localises to the cytoplasm. Functionally, a translational regulator that binds mRNA to regulate translation initiation and/or mRNA stability. Usually binds in the 5'-UTR at or near the Shine-Dalgarno sequence preventing ribosome-binding, thus repressing translation. Its main target seems to be the major flagellin gene, while its function is anatagonized by FliW. In Thermosipho africanus (strain TCF52B), this protein is Translational regulator CsrA.